Here is a 436-residue protein sequence, read N- to C-terminus: ATP-dependent RNA helicase RhlB (436 aa).

A Q motif motif is present at residues 9-37; it reads QKFADLDLLPQVIEGLEKKGFDYCTPIQA. Residues 40-219 form the Helicase ATP-binding domain; that stretch reads LPVLLTGQDI…FEHMHNPEHV (180 aa). 53-60 contacts ATP; the sequence is AQTGTGKT. Positions 165–168 match the DEAD box motif; it reads DEAD. Residues 245–390 form the Helicase C-terminal domain; it reads ALLQTLIEEE…MSDYDASALL (146 aa). The segment at 398–436 is disordered; it reads RLRTRNPQQRRSNNNGPRNGNRKPNQNRRPRQPRHNKEA. Low complexity predominate over residues 402 to 421; the sequence is RNPQQRRSNNNGPRNGNRKP. Residues 422-436 are compositionally biased toward basic residues; sequence NQNRRPRQPRHNKEA.

Belongs to the DEAD box helicase family. RhlB subfamily. As to quaternary structure, component of the RNA degradosome, which is a multiprotein complex involved in RNA processing and mRNA degradation.

The protein resides in the cytoplasm. The catalysed reaction is ATP + H2O = ADP + phosphate + H(+). DEAD-box RNA helicase involved in RNA degradation. Has RNA-dependent ATPase activity and unwinds double-stranded RNA. In Vibrio atlanticus (strain LGP32) (Vibrio splendidus (strain Mel32)), this protein is ATP-dependent RNA helicase RhlB.